Here is a 168-residue protein sequence, read N- to C-terminus: RxLR effector protein PITG_12737 (168 aa).

An N-terminal signal peptide occupies residues 1–20 (MRACAILVVAAAAVLTGSTA). The RxLR-dEER motif lies at 54–77 (RRLRKHKTVNTNSEMEYESEAEAR).

Belongs to the RxLR effector family.

The protein localises to the secreted. It is found in the host nucleus. The protein resides in the host cytoplasm. Effector that enhances P.infestans colonization of Nicotiana benthamiana leaves. The sequence is that of RxLR effector protein PITG_12737 from Phytophthora infestans (strain T30-4) (Potato late blight agent).